The sequence spans 1683 residues: Genome polyprotein (1683 aa).

The Extracellular portion of the chain corresponds to methionine 1–glycine 445. Disulfide bonds link cysteine 3–cysteine 30, cysteine 60–cysteine 121, cysteine 74–cysteine 105, and cysteine 92–cysteine 116. N-linked (GlcNAc...) asparagine; by host glycosylation occurs at asparagine 67. Positions aspartate 98–glycine 111 are fusion peptide. Asparagine 153 is a glycosylation site (N-linked (GlcNAc...) asparagine; by host). Cystine bridges form between cysteine 185–cysteine 285 and cysteine 302–cysteine 333. The chain crosses the membrane as a helical span at residues alanine 446–isoleucine 466. Over glycine 467–serine 472 the chain is Cytoplasmic. Residues threonine 473 to valine 493 form a helical membrane-spanning segment. At glutamine 494 to isoleucine 915 the chain is on the extracellular side. Cystine bridges form between cysteine 499-cysteine 510, cysteine 550-cysteine 638, cysteine 674-cysteine 718, cysteine 775-cysteine 824, cysteine 786-cysteine 808, and cysteine 807-cysteine 811. An N-linked (GlcNAc...) asparagine; by host glycan is attached at asparagine 702. Residues glycine 916–leucine 940 form a helical membrane-spanning segment. The Cytoplasmic portion of the chain corresponds to arginine 941–lysine 946. The chain crosses the membrane as a helical span at residues glutamate 947–glutamate 965. Topologically, residues threonine 966–lysine 989 are lumenal. A helical membrane pass occupies residues tyrosine 990–asparagine 1010. Position 1011 (alanine 1011) is a topological domain, cytoplasmic. The chain crosses the membrane as a helical span at residues tryptophan 1012 to threonine 1030. Over serine 1031–aspartate 1037 the chain is Lumenal. The helical transmembrane segment at tryptophan 1038 to leucine 1058 threads the bilayer. Residues serine 1059–lysine 1683 are Cytoplasmic-facing. The 178-residue stretch at alanine 1066–isoleucine 1243 folds into the Peptidase S7 domain. Catalysis depends on charge relay system; for serine protease NS3 activity residues histidine 1116, aspartate 1140, and serine 1200. In terms of domain architecture, Helicase ATP-binding spans aspartate 1245 to glutamate 1401. The segment at arginine 1249 to arginine 1252 is important for RNA-binding. Residue leucine 1258–threonine 1265 coordinates ATP. The short motif at aspartate 1349 to histidine 1352 is the DEAH box element. Residues serine 1411–aspartate 1582 enclose the Helicase C-terminal domain.

Capsid protein C: Homodimer. Interacts (via N-terminus) with host EXOC1 (via C-terminus); this interaction results in EXOC1 degradation through the proteasome degradation pathway. Protein prM: Forms heterodimers with envelope protein E in the endoplasmic reticulum and Golgi. As to quaternary structure, homodimer; in the endoplasmic reticulum and Golgi. Interacts with protein prM. Interacts with non-structural protein 1. In terms of assembly, homodimer; Homohexamer when secreted. Interacts with envelope protein E. Interacts (via N-terminus) with serine protease NS3. Non-structural protein 2B: Forms a heterodimer with serine protease NS3. May form homooligomers. As to quaternary structure, forms a heterodimer with NS2B. Interacts with NS4B. Interacts with unphosphorylated RNA-directed RNA polymerase NS5; this interaction stimulates RNA-directed RNA polymerase NS5 guanylyltransferase activity. Interacts with host SHFL. Specific enzymatic cleavages in vivo yield mature proteins. Cleavages in the lumen of endoplasmic reticulum are performed by host signal peptidase, wereas cleavages in the cytoplasmic side are performed by the Serine protease NS3. Signal cleavage at the 2K-4B site requires a prior NS3 protease-mediated cleavage at the 4A-2K site. In terms of processing, N-glycosylated. The excreted form is glycosylated and this is required for efficient secretion of the protein from infected cells. Post-translationally, N-glycosylated. Specific enzymatic cleavages in vivo yield mature proteins. Cleavages in the lumen of endoplasmic reticulum are performed by host signal peptidase, wereas cleavages in the cytoplasmic side are performed by serine protease NS3. Signal cleavage at the 2K-4B site requires a prior NS3 protease-mediated cleavage at the 4A-2K site.

The protein localises to the virion membrane. It localises to the host endoplasmic reticulum membrane. It is found in the secreted. The enzyme catalyses Selective hydrolysis of -Xaa-Xaa-|-Yaa- bonds in which each of the Xaa can be either Arg or Lys and Yaa can be either Ser or Ala.. It catalyses the reaction a ribonucleoside 5'-triphosphate + H2O = a ribonucleoside 5'-diphosphate + phosphate + H(+). The catalysed reaction is ATP + H2O = ADP + phosphate + H(+). Its function is as follows. Binds to host cell surface receptor and mediates fusion between viral and cellular membranes. Envelope protein is synthesized in the endoplasmic reticulum in the form of heterodimer with protein prM. They play a role in virion budding in the ER, and the newly formed immature particle is covered with 60 spikes composed of heterodimer between precursor prM and envelope protein E. The virion is transported to the Golgi apparatus where the low pH causes dissociation of PrM-E heterodimers and formation of E homodimers. prM-E cleavage is inefficient, and many virions are only partially matured. These uncleaved prM would play a role in immune evasion. In terms of biological role, involved in immune evasion, pathogenesis and viral replication. Once cleaved off the polyprotein, is targeted to three destinations: the viral replication cycle, the plasma membrane and the extracellular compartment. Essential for viral replication. Required for formation of the replication complex and recruitment of other non-structural proteins to the ER-derived membrane structures. Excreted as a hexameric lipoparticle that plays a role against host immune response. Antagonizing the complement function. Binds to the host macrophages and dendritic cells. Inhibits signal transduction originating from Toll-like receptor 3 (TLR3). Disrupts the host endothelial glycocalyx layer of host pulmonary microvascular endothelial cells, inducing degradation of sialic acid and shedding of heparan sulfate proteoglycans. NS1 induces expression of sialidases, heparanase, and activates cathepsin L, which activates heparanase via enzymatic cleavage. These effects are probably linked to the endothelial hyperpermeability observed in severe dengue disease. Functionally, component of the viral RNA replication complex that functions in virion assembly and antagonizes the host immune response. Its function is as follows. Serine protease subunit NS2B: Required cofactor for the serine protease function of NS3. May have membrane-destabilizing activity and form viroporins. In terms of biological role, displays three enzymatic activities: serine protease, NTPase and RNA helicase. NS3 serine protease, in association with NS2B, performs its autocleavage and cleaves the polyprotein at dibasic sites in the cytoplasm: C-prM, NS2A-NS2B, NS2B-NS3, NS3-NS4A, NS4A-2K and NS4B-NS5. NS3 RNA helicase binds RNA and unwinds dsRNA in the 3' to 5' direction. The chain is Genome polyprotein from Aedimorphus (Red guenon).